Here is a 259-residue protein sequence, read N- to C-terminus: DNA adenine methylase (259 aa).

S-adenosyl-L-methionine-binding positions include Tyr7, Lys11, 32-37 (FCGGLS), Asp50, 156-157 (HF), Asp171, and Tyr181.

Belongs to the N(4)/N(6)-methyltransferase family. Monomer.

The enzyme catalyses a 2'-deoxyadenosine in DNA + S-adenosyl-L-methionine = an N(6)-methyl-2'-deoxyadenosine in DNA + S-adenosyl-L-homocysteine + H(+). Functionally, an alpha subtype methylase, recognizes the double-stranded sequence 5'-GATC-3' and methylates A-2. Also acts on 5-hydroxymethylcytosine (hmC)-containing DNA, the normal base in this virus. May prevent degradation of viral DNA by the host restriction-modification antiviral defense system. In Enterobacteria phage T4 (Bacteriophage T4), this protein is DNA adenine methylase.